The chain runs to 674 residues: Methionine--tRNA ligase (674 aa).

The short motif at 11–21 (PYANGDLHLGH) is the 'HIGH' region element. 4 residues coordinate Zn(2+): C142, C145, C155, and C158. The 'KMSKS' region motif lies at 330-334 (KMSKS). K333 provides a ligand contact to ATP. One can recognise a tRNA-binding domain in the interval 574–674 (DFMKVDLRIA…EGAQPGMRVK (101 aa)).

The protein belongs to the class-I aminoacyl-tRNA synthetase family. MetG type 1 subfamily. In terms of assembly, homodimer. Zn(2+) is required as a cofactor.

It is found in the cytoplasm. The catalysed reaction is tRNA(Met) + L-methionine + ATP = L-methionyl-tRNA(Met) + AMP + diphosphate. Its function is as follows. Is required not only for elongation of protein synthesis but also for the initiation of all mRNA translation through initiator tRNA(fMet) aminoacylation. The chain is Methionine--tRNA ligase from Francisella tularensis subsp. holarctica (strain OSU18).